The chain runs to 320 residues: o-succinylbenzoate synthase (320 aa).

The active-site Proton donor is the Lys133. Positions 161, 190, and 213 each coordinate Mg(2+). Residue Lys235 is the Proton acceptor of the active site.

Belongs to the mandelate racemase/muconate lactonizing enzyme family. MenC type 1 subfamily. A divalent metal cation is required as a cofactor.

It carries out the reaction (1R,6R)-6-hydroxy-2-succinyl-cyclohexa-2,4-diene-1-carboxylate = 2-succinylbenzoate + H2O. The protein operates within quinol/quinone metabolism; 1,4-dihydroxy-2-naphthoate biosynthesis; 1,4-dihydroxy-2-naphthoate from chorismate: step 4/7. It participates in quinol/quinone metabolism; menaquinone biosynthesis. Functionally, converts 2-succinyl-6-hydroxy-2,4-cyclohexadiene-1-carboxylate (SHCHC) to 2-succinylbenzoate (OSB). This is o-succinylbenzoate synthase from Salmonella paratyphi C (strain RKS4594).